The chain runs to 865 residues: Armadillo repeat-containing protein 2 (865 aa).

Disordered stretches follow at residues 39 to 75 (TVRT…FSVH) and 214 to 243 (SVPF…DQSR). A compositionally biased stretch (polar residues) spans 60 to 75 (SSRTPENRPPSSFSVH). ARM repeat units follow at residues 261–300 (IEVD…HALE), 303–343 (NMLG…ALKV), 362–402 (EKND…TIKF), 407–448 (PEFL…HLLV), 461–502 (PLAR…KLTS), 505–546 (DCCV…NLTA), 550–587 (QARE…GEGD), 589–614 (RPEA…NLAI), 617–660 (GVGP…NLSY), 662–703 (KVKN…NLSQ), 705–744 (HDIC…NLTV), and 746–788 (RDKR…NFSE).

Its function is as follows. Required for sperm flagellum axoneme organization and function. Involved in axonemal central pair complex assembly and/or stability. This chain is Armadillo repeat-containing protein 2, found in Bos taurus (Bovine).